An 87-amino-acid chain; its full sequence is Small ribosomal subunit protein bS20 (87 aa).

Positions 1-20 (MANHKSAEKRARQTIKRTER) are disordered.

This sequence belongs to the bacterial ribosomal protein bS20 family.

Functionally, binds directly to 16S ribosomal RNA. The chain is Small ribosomal subunit protein bS20 from Campylobacter lari (strain RM2100 / D67 / ATCC BAA-1060).